Consider the following 199-residue polypeptide: MNKTNDIDQLIYLFSKLPGLGIRSARRIVLYLLQDKDVRLKSLINHLIELDKKIVKCEICGNMDTKNICHICSSEHRDKSTIAIVETVAELCAMERSGNFKGLYHVLGHNLSAASRQNPRILRLPELLKRCFVENIKEVIIATNSTLEGQTTAYFIIEYLKEHPAKISRLASGIPIGGELDYLDEGTLSAAINLRQPCE.

The C4-type zinc finger occupies 57-72 (CEICGNMDTKNICHIC). The Toprim domain maps to 80–175 (STIAIVETVA…KISRLASGIP (96 aa)).

The protein belongs to the RecR family.

Functionally, may play a role in DNA repair. It seems to be involved in an RecBC-independent recombinational process of DNA repair. It may act with RecF and RecO. The protein is Recombination protein RecR of Rickettsia typhi (strain ATCC VR-144 / Wilmington).